The sequence spans 123 residues: Large ribosomal subunit protein eL8 (123 aa).

This sequence belongs to the eukaryotic ribosomal protein eL8 family. In terms of assembly, part of the 50S ribosomal subunit. Probably part of the RNase P complex.

Its subcellular location is the cytoplasm. Its function is as follows. Multifunctional RNA-binding protein that recognizes the K-turn motif in ribosomal RNA, the RNA component of RNase P, box H/ACA, box C/D and box C'/D' sRNAs. The protein is Large ribosomal subunit protein eL8 of Thermococcus gammatolerans (strain DSM 15229 / JCM 11827 / EJ3).